Consider the following 610-residue polypeptide: MENLISLVNKIQRACTALGDHGDSSALPTLWDSLPAIAVVGGQSSGKSSVLESIVGKDFLPRGSGIVTRRPLVLQLQKIDDGTREYAEFLHLPRKKFTDFAAVRKEIQDETDRETGRSKAISSVPIHLSIYSPNVVNLTLIDLPGLTKVAVDGQSDSIVKDIENMVRSYIEKPNCIILAISPANQDLATSDAIKISREVDPSGDRTFGVLTKIDLMDKGTDAVEILEGRSFKLKYPWVGVVNRSQADINKNVDMIAARKREREYFSNTTEYRHLANKMGSEHLAKMLSKHLERVIKSRIPGIQSLINKTVLELETELSRLGKPIAADAGGKLYSIMEICRLFDQIFKEHLDGVRAGGEKVYNVFDNQLPAALKRLQFDKQLAMDNIRKLVTEADGYQPHLIAPEQGYRRLIESSIVSIRGPAEASVDTVHAILKDLVHKSVNETVELKQYPALRVEVTNAAIESLDKMREGSKKATLQLVDMECSYLTVDFFRKLPQDVEKGGNPTHSIFDRYNDSYLRRIGSNVLSYVNMVCAGLRNSIPKSIVYCQVREAKRSLLDHFFAELGTMDMKRLSSLLNEDPAIMERRSAISKRLELYRAAQSEIDAVAWSK.

An N-acetylmethionine modification is found at M1. A Dynamin-type G domain is found at 31-300; sequence WDSLPAIAVV…LERVIKSRIP (270 aa). Residues 41 to 48 are G1 motif; the sequence is GGQSSGKS. 44 to 49 is a GTP binding site; it reads SSGKSS. The segment at 67–69 is G2 motif; that stretch reads VTR. Residues 142 to 145 are G3 motif; the sequence is DLPG. The interval 211–214 is G4 motif; it reads TKID. GTP is bound by residues 212 to 217 and 242 to 245; these read KIDLMD and NRSQ. A G5 motif region spans residues 241–244; that stretch reads VNRS. The GED domain maps to 518 to 610; the sequence is LRRIGSNVLS…SEIDAVAWSK (93 aa).

The protein belongs to the TRAFAC class dynamin-like GTPase superfamily. Dynamin/Fzo/YdjA family. In terms of assembly, forms homodimer and may homooligomerize and heterooligomerize to form the phragmoplastin complex. Interacts with AGD3/VAN3. May interact with CALS1. Binds to AHK2. Binds to SH3P2. Forms a complex made of SH3P2 and DRP1A and triggers its accumulation at the cell plate. Interacts with DRP2B at the plasma membrane and in forming clathrin-coated vesicles (CCV). Binds to PHIP1. Ubiquitous. Expressed in leaves (at protein level).

The protein resides in the cytoplasm. It is found in the cytoskeleton. The protein localises to the phragmoplast. Its subcellular location is the cell cortex. It localises to the cytoplasmic vesicle. The protein resides in the clathrin-coated vesicle. It is found in the cell membrane. It catalyses the reaction GTP + H2O = GDP + phosphate + H(+). Microtubule-associated force-producing protein that is targeted to at the leading edges of the forming cell plate during cytokinesis. Also plays a major role in plasma membrane maintenance and cell wall integrity with implications in vesicular trafficking, polar cell expansion, vascular formation, and other aspects of plant growth and development, including stigmatic papillae expansion. Collaboratively with DRP2B, participates in clathrin-coated vesicle formation during endocytosis. Necessary for BOR1 polar localization in low-boron (B) conditions as well as for BOR1 endocytosis and subsequent degradation under high-concentration of boron. Has a GTPase activity. Required for the sterols-dependent dynamic high lipid order observed at the cell plate of dividing cells. Together with SH3P2, converts the fused vesicles to tubular structures at the cell plate and phragmoplasts during cytokinesis. With DRP2B and PIP5K3, required for the precise coordination of polar ARAC3/ROP6 and ARAC4/ROP2 placement and subsequent root hair positioning during planar polarity formation in root hair-forming cells, probably by mediating the correct basal-to-planar polarity switching of D6PK into the polar, lipid-enriched domain. Involved in endocytosis required for cellulose deposition during cell wall formation and elongation. Interacts with plasma membrane-mimetic liposomes and induces their clustering. The protein is Phragmoplastin DRP1A of Arabidopsis thaliana (Mouse-ear cress).